A 388-amino-acid polypeptide reads, in one-letter code: Beta-hexosaminidase LpqI (388 aa).

The first 19 residues, 1 to 19, serve as a signal peptide directing secretion; the sequence is MAFPRTLAILAAAAALVVA. Cys-20 carries the N-palmitoyl cysteine lipid modification. Cys-20 is lipidated: S-diacylglycerol cysteine. Residues Asp-123, Arg-131, Arg-193, and 223–224 contribute to the substrate site; that span reads KH. The active-site Proton donor/acceptor is the His-236. Asp-311 acts as the Nucleophile in catalysis.

The protein belongs to the glycosyl hydrolase 3 family.

It localises to the cell inner membrane. The enzyme catalyses Hydrolysis of terminal non-reducing N-acetyl-D-hexosamine residues in N-acetyl-beta-D-hexosaminides.. The protein operates within cell wall biogenesis; peptidoglycan recycling. Its function is as follows. Plays a role in peptidoglycan recycling by cleaving the terminal beta-1,4-linked N-acetylglucosamine (GlcNAc) from peptidoglycan fragments. Acts as a regulator for GlcNAc-MurNAc levels by cleaving disaccharides and allowing the breakdown of MurNAc. The sequence is that of Beta-hexosaminidase LpqI from Mycobacterium tuberculosis (strain ATCC 25618 / H37Rv).